A 228-amino-acid polypeptide reads, in one-letter code: Fluoride-specific ion channel FluC (228 aa).

7 consecutive transmembrane segments (helical) span residues 3 to 23 (LSLF…FWVS), 37 to 57 (GTLF…VMMI), 72 to 92 (VGFL…LALF), 101 to 121 (ALNV…GAVL), 141 to 161 (IFGA…LAFA), 172 to 192 (LVLV…LVVT), and 202 to 222 (LWGA…LGLV). Gly76 and Thr79 together coordinate Na(+).

This sequence belongs to the fluoride channel Fluc/FEX (TC 1.A.43) family.

It localises to the cell inner membrane. It carries out the reaction fluoride(in) = fluoride(out). Na(+) is not transported, but it plays an essential structural role and its presence is essential for fluoride channel function. Fluoride-specific ion channel. Important for reducing fluoride concentration in the cell, thus reducing its toxicity. The sequence is that of Fluoride-specific ion channel FluC from Methylococcus capsulatus (strain ATCC 33009 / NCIMB 11132 / Bath).